Here is a 262-residue protein sequence, read N- to C-terminus: Small ribosomal subunit protein uS2 (262 aa).

A disordered region spans residues 224–246 (GNQGEDQDDAQEQQVAADKKADS).

It belongs to the universal ribosomal protein uS2 family.

The sequence is that of Small ribosomal subunit protein uS2 from Lacticaseibacillus casei (strain BL23) (Lactobacillus casei).